Reading from the N-terminus, the 447-residue chain is Chordin-like protein 1 (447 aa).

The signal sequence occupies residues 1–22; that stretch reads MEGIKYIASLVFFFVFLEASKT. VWFC domains lie at 30-95 and 108-174; these read TYCM…PRCP and KSCE…RVCR. N-linked (GlcNAc...) asparagine glycosylation is present at asparagine 113. A Cell attachment site motif is present at residues 174-176; sequence RGD. The segment at 199-219 is disordered; sequence HSYLRSPYDPPPSRQAGGLPR. Residues 253–318 enclose the VWFC 3 domain; sequence QVCVSNGKTY…LDGKCCKVCP (66 aa). Asparagine 286 carries an N-linked (GlcNAc...) asparagine glycan.

Its subcellular location is the secreted. In terms of biological role, seems to antagonize the function of BMP4 by binding to it and preventing its interaction with receptors. Alters the fate commitment of neural stem cells from gliogenesis to neurogenesis. Contributes to neuronal differentiation of neural stem cells in the brain by preventing the adoption of a glial fate. May play a crucial role in dorsoventral axis formation. May play a role in embryonic bone formation. Plays a role during anterior segment eye development. This Rattus norvegicus (Rat) protein is Chordin-like protein 1 (Chrdl1).